The sequence spans 76 residues: EMBRYO SURROUNDING FACTOR 1-like protein 8 (76 aa).

The first 22 residues, 1–22 (MSSSQFFILCIILISSFPLHEC), serve as a signal peptide directing secretion. Disulfide bonds link cysteine 38–cysteine 54, cysteine 43–cysteine 74, cysteine 52–cysteine 70, and cysteine 55–cysteine 63.

Belongs to the MEG family. In terms of tissue distribution, expressed in flowers.

This chain is EMBRYO SURROUNDING FACTOR 1-like protein 8 (ESFL8), found in Arabidopsis thaliana (Mouse-ear cress).